The sequence spans 305 residues: ATP synthase gamma chain (305 aa).

This sequence belongs to the ATPase gamma chain family. F-type ATPases have 2 components, CF(1) - the catalytic core - and CF(0) - the membrane proton channel. CF(1) has five subunits: alpha(3), beta(3), gamma(1), delta(1), epsilon(1). CF(0) has three main subunits: a, b and c.

It localises to the cell membrane. Functionally, produces ATP from ADP in the presence of a proton gradient across the membrane. The gamma chain is believed to be important in regulating ATPase activity and the flow of protons through the CF(0) complex. This chain is ATP synthase gamma chain, found in Mycobacterium tuberculosis (strain ATCC 25177 / H37Ra).